Here is a 115-residue protein sequence, read N- to C-terminus: Secreted RxLR effector protein 2 (115 aa).

A signal peptide spans methionine 1 to alanine 22. The RxLR-dEER signature appears at arginine 57–arginine 82.

This sequence belongs to the RxLR effector family.

It is found in the secreted. It localises to the host cytoplasm. The protein resides in the host nucleus. Its function is as follows. Effector that acts as a broad suppressor of cell death to interrupt plant immunity. Inhibits cell death induced by cell death-inducing proteins, including the PAMP elicitor INF1 from P.infestans. The polypeptide is Secreted RxLR effector protein 2 (Plasmopara viticola (Downy mildew of grapevine)).